The following is a 320-amino-acid chain: Small ribosomal subunit protein uS15m (320 aa).

2 disordered regions span residues 37-60 and 214-242; these read NISQ…AQQR and QSLE…DTGS.

Belongs to the universal ribosomal protein uS15 family. Component of the mitochondrial small ribosomal subunit (mt-SSU). Mature N.crassa 74S mitochondrial ribosomes consist of a small (37S) and a large (54S) subunit. The 37S small subunit contains a 16S ribosomal RNA (16S mt-rRNA) and 32 different proteins. The 54S large subunit contains a 23S rRNA (23S mt-rRNA) and 42 different proteins.

Its subcellular location is the mitochondrion. Functionally, component of the mitochondrial ribosome (mitoribosome), a dedicated translation machinery responsible for the synthesis of mitochondrial genome-encoded proteins, including at least some of the essential transmembrane subunits of the mitochondrial respiratory chain. The mitoribosomes are attached to the mitochondrial inner membrane and translation products are cotranslationally integrated into the membrane. The polypeptide is Small ribosomal subunit protein uS15m (mrps28) (Neurospora crassa (strain ATCC 24698 / 74-OR23-1A / CBS 708.71 / DSM 1257 / FGSC 987)).